Here is a 299-residue protein sequence, read N- to C-terminus: 4-diphosphocytidyl-2-C-methyl-D-erythritol kinase (299 aa).

The active site involves Lys-17. Residue 99–109 (PLASGLGGGSS) participates in ATP binding. Asp-142 is an active-site residue.

Belongs to the GHMP kinase family. IspE subfamily.

It carries out the reaction 4-CDP-2-C-methyl-D-erythritol + ATP = 4-CDP-2-C-methyl-D-erythritol 2-phosphate + ADP + H(+). Its pathway is isoprenoid biosynthesis; isopentenyl diphosphate biosynthesis via DXP pathway; isopentenyl diphosphate from 1-deoxy-D-xylulose 5-phosphate: step 3/6. Catalyzes the phosphorylation of the position 2 hydroxy group of 4-diphosphocytidyl-2C-methyl-D-erythritol. This is 4-diphosphocytidyl-2-C-methyl-D-erythritol kinase from Deinococcus radiodurans (strain ATCC 13939 / DSM 20539 / JCM 16871 / CCUG 27074 / LMG 4051 / NBRC 15346 / NCIMB 9279 / VKM B-1422 / R1).